Reading from the N-terminus, the 364-residue chain is Nucleoside ABC transporter permease protein NupB (364 aa).

8 consecutive transmembrane segments (helical) span residues 9–29 (LVPL…MLAF), 77–99 (FNIG…ALSF), 105–125 (LLMI…MGFI), 138–158 (VITT…MIHS), 195–215 (TLNI…IIFT), 244–264 (LILS…VYGF), 284–304 (MAVA…ALLF), and 326–346 (VVTA…VMLP).

Belongs to the binding-protein-dependent transport system permease family. The complex is composed of two ATP-binding proteins (NupA), two transmembrane proteins (NupB and NupC) and a solute-binding protein (BmpA).

It localises to the cell membrane. Part of an ABC transporter complex involved in the uptake of all common nucleosides. Responsible for the translocation of the substrate across the membrane. The protein is Nucleoside ABC transporter permease protein NupB of Lactococcus lactis subsp. cremoris (strain MG1363).